A 223-amino-acid chain; its full sequence is Phosphoglycolate phosphatase (223 aa).

The active-site Nucleophile is the D10. Mg(2+) is bound by residues D10 and D12. Substrate is bound at residue K149. Residues D172 and D176 each coordinate Mg(2+).

It belongs to the archaeal SPP-like hydrolase family. Mg(2+) serves as cofactor.

It catalyses the reaction 2-phosphoglycolate + H2O = glycolate + phosphate. Catalyzes the dephosphorylation of 2-phosphoglycolate. The polypeptide is Phosphoglycolate phosphatase (Archaeoglobus fulgidus (strain ATCC 49558 / DSM 4304 / JCM 9628 / NBRC 100126 / VC-16)).